The chain runs to 302 residues: Ribostamycin:4-(gamma-L-glutamylamino)-(S)-2-hydroxybutanoyl-[BtrI acyl-carrier protein] 4-(gamma-L-glutamylamino)-(S)-2-hydroxybutanoate transferase (302 aa).

The enzyme catalyses 4-(gamma-L-glutamylamino)-(2S)-2-hydroxybutanoyl-[BtrI ACP] + ribostamycin = gamma-L-glutamyl-butirosin B + holo-[BtrI ACP] + H(+). Its pathway is antibiotic biosynthesis; butirosin biosynthesis. Its function is as follows. Aminoglycoside acyltransferase that attaches the (S)-4-amino-2-hydroxybutyrate (AHBA) side chain from the acyl carrier protein BtrI to the aminoglycoside ribostamycin in the biosynthetic pathway of butirosin. The AHBA side chain protects the antibiotic from several common resistance mechanisms. The sequence is that of Ribostamycin:4-(gamma-L-glutamylamino)-(S)-2-hydroxybutanoyl-[BtrI acyl-carrier protein] 4-(gamma-L-glutamylamino)-(S)-2-hydroxybutanoate transferase (btrH) from Niallia circulans (Bacillus circulans).